The chain runs to 437 residues: Histidinol dehydrogenase (437 aa).

Residues Tyr-137, Gln-199, and Asn-222 each coordinate NAD(+). Residues Ser-245, Gln-267, and His-270 each contribute to the substrate site. Residues Gln-267 and His-270 each coordinate Zn(2+). Residues Glu-335 and His-336 each act as proton acceptor in the active site. Substrate contacts are provided by His-336, Asp-369, Glu-423, and His-428. Asp-369 contributes to the Zn(2+) binding site. Position 428 (His-428) interacts with Zn(2+).

The protein belongs to the histidinol dehydrogenase family. Zn(2+) is required as a cofactor.

The catalysed reaction is L-histidinol + 2 NAD(+) + H2O = L-histidine + 2 NADH + 3 H(+). It functions in the pathway amino-acid biosynthesis; L-histidine biosynthesis; L-histidine from 5-phospho-alpha-D-ribose 1-diphosphate: step 9/9. Catalyzes the sequential NAD-dependent oxidations of L-histidinol to L-histidinaldehyde and then to L-histidine. In Parasynechococcus marenigrum (strain WH8102), this protein is Histidinol dehydrogenase.